Reading from the N-terminus, the 179-residue chain is Large ribosomal subunit protein uL5 (179 aa).

This sequence belongs to the universal ribosomal protein uL5 family. As to quaternary structure, part of the 50S ribosomal subunit; part of the 5S rRNA/L5/L18/L25 subcomplex. Contacts the 5S rRNA and the P site tRNA. Forms a bridge to the 30S subunit in the 70S ribosome.

This is one of the proteins that bind and probably mediate the attachment of the 5S RNA into the large ribosomal subunit, where it forms part of the central protuberance. In the 70S ribosome it contacts protein S13 of the 30S subunit (bridge B1b), connecting the 2 subunits; this bridge is implicated in subunit movement. Contacts the P site tRNA; the 5S rRNA and some of its associated proteins might help stabilize positioning of ribosome-bound tRNAs. The polypeptide is Large ribosomal subunit protein uL5 (Pectobacterium atrosepticum (strain SCRI 1043 / ATCC BAA-672) (Erwinia carotovora subsp. atroseptica)).